Here is a 317-residue protein sequence, read N- to C-terminus: 2-keto-3-deoxygluconate permease 1 (317 aa).

10 consecutive transmembrane segments (helical) span residues 10–30 (VPGGMMVVPLVIGAVINTFAP), 47–67 (AAPLIGAFLLCMGAGISVKAA), 82–102 (LLVAIGIGLGVEHLFGAEGIF), 106–126 (GVAIIAAMSNSNGGLYAALVG), 134–154 (VGAISILSLNDGPFFTMIALG), 159–179 (ANIPIMALVAVLVPLVVGMIL), 195–215 (PLLIPFFAFALGAGINLEMLL), 217–237 (GGLAGILLGVLTTFVGGFFNI), 248–268 (IAGAAASSTAGNAVATPLAIA), and 279–299 (AAAAPLIAASVITTAILTPVL).

This sequence belongs to the KdgT transporter family.

The protein resides in the cell inner membrane. It carries out the reaction 2-dehydro-3-deoxy-D-gluconate(in) + H(+)(in) = 2-dehydro-3-deoxy-D-gluconate(out) + H(+)(out). Catalyzes the proton-dependent uptake of 2-keto-3-deoxygluconate (KDG) into the cell. The polypeptide is 2-keto-3-deoxygluconate permease 1 (Salmonella typhi).